A 485-amino-acid polypeptide reads, in one-letter code: Putative aldehyde dehydrogenase AldY (485 aa).

Position 231–236 (Gly231–Gly236) interacts with NAD(+). Catalysis depends on residues Glu253 and Cys287.

Belongs to the aldehyde dehydrogenase family.

It carries out the reaction an aldehyde + NAD(+) + H2O = a carboxylate + NADH + 2 H(+). In terms of biological role, may contribute to protect cells against stress due to ethanol and related compounds. The polypeptide is Putative aldehyde dehydrogenase AldY (aldY) (Bacillus subtilis (strain 168)).